Reading from the N-terminus, the 525-residue chain is Tubulin-specific chaperone E (525 aa).

Positions 33–77 constitute a CAP-Gly domain; sequence GKVDGFEGNWYGIEWDDPKRGKHQGTVKGKQYFKCINKGSGSFMK. LRR repeat units follow at residues 300–321, 326–347, and 362–383; these read TLKS…LSSL, QLTE…GDVD, and NLKR…DKLD. The interval 414–444 is disordered; that stretch reads ENEIENDIENNNNNIKKDNNNNNKNNKNNKN. A compositionally biased stretch (low complexity) spans 422 to 444; that stretch reads ENNNNNIKKDNNNNNKNNKNNKN. The region spanning 441 to 481 is the LRRCT domain; that stretch reads NNKNNKTIFLNRLNIIPRLSNLKKLNLSDITLLERKDAELY.

Belongs to the TBCE family. Supercomplex made of cofactors A to E. Cofactors A and D function by capturing and stabilizing tubulin in a quasi-native conformation. Cofactor E binds to the cofactor D-tubulin complex; interaction with cofactor C then causes the release of tubulin polypeptides that are committed to the native state.

The protein localises to the cytoplasm. It is found in the cytoskeleton. Tubulin-folding protein; involved in the second step of the tubulin folding pathway. This Dictyostelium discoideum (Social amoeba) protein is Tubulin-specific chaperone E (tbce).